We begin with the raw amino-acid sequence, 469 residues long: Citrate synthase, mitochondrial (469 aa).

Residues 1 to 30 (MSFLTVSRLAPKLLNSKNATYFLVAARNAS) constitute a mitochondrion transit peptide. Catalysis depends on residues histidine 304 and histidine 350. Arginine 359 contributes to the oxaloacetate binding site. Aspartate 405 is a catalytic residue. Oxaloacetate contacts are provided by arginine 431 and arginine 451.

Belongs to the citrate synthase family. Homodimer.

The protein localises to the mitochondrion matrix. The catalysed reaction is oxaloacetate + acetyl-CoA + H2O = citrate + CoA + H(+). It functions in the pathway carbohydrate metabolism; tricarboxylic acid cycle; isocitrate from oxaloacetate: step 1/2. Functionally, key enzyme of the Krebs tricarboxylic acid cycle which catalyzes the synthesis of citrate from acetyl coenzyme A and oxaloacetate. In Kajikia audax (Striped marlin), this protein is Citrate synthase, mitochondrial (cs).